A 110-amino-acid polypeptide reads, in one-letter code: Flagellar hook-basal body complex protein FliE (110 aa).

The protein belongs to the FliE family.

Its subcellular location is the bacterial flagellum basal body. This is Flagellar hook-basal body complex protein FliE from Pseudomonas entomophila (strain L48).